Reading from the N-terminus, the 311-residue chain is Tryptophan 2,3-dioxygenase (311 aa).

Positions 1–37 (MQPPGGDAPAGCPFSGARAAQPAQAAHEAPHVPGEAD) are disordered. Positions 17–27 (ARAAQPAQAAH) are enriched in low complexity. Substrate is bound by residues 80 to 84 (FIIQH), Tyr-142, and Arg-146. His-269 provides a ligand contact to heme. A substrate-binding site is contributed by Thr-283.

The protein belongs to the tryptophan 2,3-dioxygenase family. In terms of assembly, homotetramer. The cofactor is heme.

It carries out the reaction L-tryptophan + O2 = N-formyl-L-kynurenine. It participates in amino-acid degradation; L-tryptophan degradation via kynurenine pathway; L-kynurenine from L-tryptophan: step 1/2. Functionally, heme-dependent dioxygenase that catalyzes the oxidative cleavage of the L-tryptophan (L-Trp) pyrrole ring and converts L-tryptophan to N-formyl-L-kynurenine. Catalyzes the oxidative cleavage of the indole moiety. This chain is Tryptophan 2,3-dioxygenase, found in Burkholderia orbicola (strain MC0-3).